The sequence spans 264 residues: Small ribosomal subunit protein eS1 (264 aa).

It belongs to the eukaryotic ribosomal protein eS1 family. As to quaternary structure, component of the small ribosomal subunit. Mature ribosomes consist of a small (40S) and a large (60S) subunit. The 40S subunit contains about 33 different proteins and 1 molecule of RNA (18S). The 60S subunit contains about 49 different proteins and 3 molecules of RNA (25S, 5.8S and 5S).

It is found in the cytoplasm. The protein is Small ribosomal subunit protein eS1 of Babesia bovis.